The sequence spans 440 residues: Trigger factor (440 aa).

A PPIase FKBP-type domain is found at G163 to P248.

This sequence belongs to the FKBP-type PPIase family. Tig subfamily.

It is found in the cytoplasm. The catalysed reaction is [protein]-peptidylproline (omega=180) = [protein]-peptidylproline (omega=0). Its function is as follows. Involved in protein export. Acts as a chaperone by maintaining the newly synthesized protein in an open conformation. Functions as a peptidyl-prolyl cis-trans isomerase. This Acidiphilium cryptum (strain JF-5) protein is Trigger factor.